The sequence spans 123 residues: Methicillin resistance regulatory protein MecI (123 aa).

The H-T-H motif DNA-binding region spans 7 to 71; that stretch reads EISSAEWEFM…KDNKIFQYYS (65 aa). The interval 74–123 is important for dimerization; it reads EESDIKYKTSKNFINKVYKGGFNSLVLNFVEKEDLSQDEIEELRNILNKK.

The protein belongs to the BlaI transcriptional regulatory family. In terms of assembly, monomer and homodimer. In terms of processing, upon exposure to beta-lactams, proteolytic cleavage at a single site impairs dimerization and abolishes repressor activity.

The protein resides in the cytoplasm. In terms of biological role, transcriptional repressor that constitutively blocks the transcription of the gene for the penicillin-binding protein MecA. Binds DNA as a dimer. The chain is Methicillin resistance regulatory protein MecI (mecI) from Staphylococcus aureus (strain Mu50 / ATCC 700699).